Consider the following 446-residue polypeptide: MKLFGTDGVRGKAGEKLSAQTAMRLAMAAGIYFRKYSATNVILVGKDTRKSGYMIETAIVAGLTAVGYNVLQIGPMPTPAIAFLTENMRCDAGIMISASHNPYYDNGIKFFDNCGDKIEENIEAEIEKIYYDDEMIANAQKTMTEIGANKRIDDVIGRYIVQIKNSFPKELTLKNLRVVLDVANGAAYKVAPTVFSELGADVIVINDEPNGSNINQSCGALHPEELANEVKRLRADIGFAFDGDADRLVVVDENGEVVHGDAVLGVLATYLNEKKALKGGAVVATVMSNAALEDYLKSHKIKLLRANVGDKYVLEMMKENGINFGGEQSGHVIFNDYAKTGDGLVTSMQVVAMMLKKGKKASEIFKAIKPYPQILLNLKITEKKPLEKIAGLKELEKNLEKDGIRSLFRYSGTENVIRLLLEGKNQNLVEKRMNEVEKFFIKALNA.

The active-site Phosphoserine intermediate is Ser99. Residues Ser99, Asp242, Asp244, and Asp246 each coordinate Mg(2+). A Phosphoserine modification is found at Ser99.

Belongs to the phosphohexose mutase family. Mg(2+) serves as cofactor. Activated by phosphorylation.

The enzyme catalyses alpha-D-glucosamine 1-phosphate = D-glucosamine 6-phosphate. Catalyzes the conversion of glucosamine-6-phosphate to glucosamine-1-phosphate. The polypeptide is Phosphoglucosamine mutase (Campylobacter curvus (strain 525.92)).